A 91-amino-acid chain; its full sequence is Putative regulatory protein Cyan7425_4125 (91 aa).

The protein belongs to the RemA family.

In Cyanothece sp. (strain PCC 7425 / ATCC 29141), this protein is Putative regulatory protein Cyan7425_4125.